Reading from the N-terminus, the 132-residue chain is Phosphoribosyl-AMP cyclohydrolase (132 aa).

Asp81 serves as a coordination point for Mg(2+). Cys82 is a binding site for Zn(2+). The Mg(2+) site is built by Asp83 and Asp85. The Zn(2+) site is built by Cys99 and Cys106.

It belongs to the PRA-CH family. As to quaternary structure, homodimer. It depends on Mg(2+) as a cofactor. Requires Zn(2+) as cofactor.

It is found in the cytoplasm. The enzyme catalyses 1-(5-phospho-beta-D-ribosyl)-5'-AMP + H2O = 1-(5-phospho-beta-D-ribosyl)-5-[(5-phospho-beta-D-ribosylamino)methylideneamino]imidazole-4-carboxamide. Its pathway is amino-acid biosynthesis; L-histidine biosynthesis; L-histidine from 5-phospho-alpha-D-ribose 1-diphosphate: step 3/9. Its function is as follows. Catalyzes the hydrolysis of the adenine ring of phosphoribosyl-AMP. The sequence is that of Phosphoribosyl-AMP cyclohydrolase from Chromobacterium violaceum (strain ATCC 12472 / DSM 30191 / JCM 1249 / CCUG 213 / NBRC 12614 / NCIMB 9131 / NCTC 9757 / MK).